The following is a 390-amino-acid chain: 5-hydroxytryptamine receptor 1B (390 aa).

The disordered stretch occupies residues 1 to 21; it reads MEETGAQCAPPPPAGSQTGVS. At 1-46 the chain is on the extracellular side; sequence MEETGAQCAPPPPAGSQTGVSQVNLSAAPSHNCSTEGYVYQDSVAL. N-linked (GlcNAc...) asparagine glycans are attached at residues asparagine 24 and asparagine 32. Residues 47–72 form a helical membrane-spanning segment; that stretch reads PWKVLLVVLLALITLATTLSNAFVIA. Residues 73 to 86 lie on the Cytoplasmic side of the membrane; sequence TVYRTRKLHTPANY. Residues 87-111 form a helical membrane-spanning segment; sequence LIASLAVTDLLVSILVMPISTMYVV. The Extracellular portion of the chain corresponds to 112–119; that stretch reads TGRWTLGQ. A helical membrane pass occupies residues 120-145; the sequence is VVCDFWLSSDITCCTASILHLCVIAL. Residues cysteine 122 and cysteine 199 are joined by a disulfide bond. Residues aspartate 129 and threonine 134 each coordinate ergotamine. Residues 146 to 148 carry the DRY motif; important for ligand-induced conformation changes and signaling motif; sequence DRY. Residues 146–165 are Cytoplasmic-facing; the sequence is DRYWAITDAVEYSAKRTPKR. Residues 166-184 traverse the membrane as a helical segment; that stretch reads AAVMIALVWVFSISISLPP. The Extracellular portion of the chain corresponds to 185-205; it reads FFWRQAKAEEEVLDCLVNTDH. Valine 201 serves as a coordination point for ergotamine. Residues 206-229 traverse the membrane as a helical segment; the sequence is ILYTVYSTVGAFYFPTLLLIALYS. Topologically, residues 230–315 are cytoplasmic; it reads RIYVEARSRI…AARERKATKT (86 aa). The interval 251-282 is disordered; sequence LTRAQLMTDSPGSTSSVTSINSRAPDVPSESG. The span at 255–272 shows a compositional bias: polar residues; sequence QLMTDSPGSTSSVTSINS. The chain crosses the membrane as a helical span at residues 316–337; it reads LGIILGAFIVCWLPFFIISLVM. Residues 338–347 are Extracellular-facing; it reads PICKDACWFH. Residues 348–370 form a helical membrane-spanning segment; the sequence is LAIFDFFTWLGYLNSLINPIIYT. Positions 365–369 match the NPxxY motif; important for ligand-induced conformation changes and signaling motif; it reads NPIIY. Topologically, residues 371–390 are cytoplasmic; sequence MSNEDFKQAFHKLIRFKCAS. Cysteine 388 carries the S-palmitoyl cysteine lipid modification.

It belongs to the G-protein coupled receptor 1 family. Homodimer. Heterodimer with HTR1D. Post-translationally, phosphorylated. Desensitization of the receptor may be mediated by its phosphorylation. Palmitoylated.

The protein localises to the cell membrane. Its function is as follows. G-protein coupled receptor for 5-hydroxytryptamine (serotonin). Also functions as a receptor for ergot alkaloid derivatives, various anxiolytic and antidepressant drugs and other psychoactive substances, such as lysergic acid diethylamide (LSD). Ligand binding causes a conformation change that triggers signaling via guanine nucleotide-binding proteins (G proteins) and modulates the activity of downstream effectors, such as adenylate cyclase. HTR1B is coupled to G(i)/G(o) G alpha proteins and mediates inhibitory neurotransmission by inhibiting adenylate cyclase activity. Arrestin family members inhibit signaling via G proteins and mediate activation of alternative signaling pathways. Regulates the release of 5-hydroxytryptamine, dopamine and acetylcholine in the brain, and thereby affects neural activity, nociceptive processing, pain perception, mood and behavior. Besides, plays a role in vasoconstriction of cerebral arteries. The protein is 5-hydroxytryptamine receptor 1B (HTR1B) of Equus caballus (Horse).